The sequence spans 299 residues: HTH-type transcriptional repressor CarH (299 aa).

Residues 5 to 74 (TYRINIAAEL…ISEAAKLLPQ (70 aa)) form the HTH merR-type domain. The H-T-H motif DNA-binding region spans 8–27 (INIAAELAGVRVELIRAWER). A B12-binding domain is found at 180-299 (HRHGVLACFP…EEDWDRLAGT (120 aa)).

This sequence belongs to the CarA/CarH B12-binding photoregulator family. In terms of assembly, forms oligomers. Interacts with CarS.

Requires cobalamin (vitamin B12) for repressor activity. In the dark, binding of cobalamin to CarH induces its oligomerization, which enhances binding to the DNA and repressor activity. Light causes cobalamin photolysis and disruption of the cobalamin-CarH complex, which decreases interaction with DNA and allows transcription of the carB operon. Interaction with CarS also prevents binding to DNA. Negative regulator of the carB operon in the dark. Binds specifically to the CarA operator, in the region around the carB promoter, which blocks access to the RNA polymerase. This chain is HTH-type transcriptional repressor CarH (carH), found in Myxococcus xanthus.